The primary structure comprises 276 residues: Vitamin B12-binding protein (276 aa).

The N-terminal stretch at 1 to 20 (MIVRFLCWLTGLLLCTAAYA) is a signal peptide. The Fe/B12 periplasmic-binding domain maps to 24-273 (RVISLAPHAT…QLTALSPGSS (250 aa)). A disulfide bridge connects residues C186 and C262.

The protein belongs to the BtuF family. The complex is composed of two ATP-binding proteins (BtuD), two transmembrane proteins (BtuC) and a solute-binding protein (BtuF).

The protein localises to the periplasm. Functionally, part of the ABC transporter complex BtuCDF involved in vitamin B12 import. Binds vitamin B12 and delivers it to the periplasmic surface of BtuC. The polypeptide is Vitamin B12-binding protein (Pectobacterium carotovorum subsp. carotovorum (strain PC1)).